The following is a 351-amino-acid chain: sn-glycerol-3-phosphate import ATP-binding protein UgpC (351 aa).

The region spanning Ile-4–Ile-235 is the ABC transporter domain. Position 37–44 (Gly-37–Ser-44) interacts with ATP.

The protein belongs to the ABC transporter superfamily. sn-glycerol-3-phosphate importer (TC 3.A.1.1.3) family. In terms of assembly, the complex is composed of two ATP-binding proteins (UgpC), two transmembrane proteins (UgpA and UgpE) and a solute-binding protein (UgpB).

The protein localises to the cell inner membrane. It catalyses the reaction sn-glycerol 3-phosphate(out) + ATP + H2O = sn-glycerol 3-phosphate(in) + ADP + phosphate + H(+). In terms of biological role, part of the ABC transporter complex UgpBAEC involved in sn-glycerol-3-phosphate (G3P) import. Responsible for energy coupling to the transport system. The chain is sn-glycerol-3-phosphate import ATP-binding protein UgpC from Brucella abortus (strain 2308).